Reading from the N-terminus, the 779-residue chain is Ribonucleoside-diphosphate reductase large subunit (779 aa).

Residues Ser178, 193–194 (SC), Gly222, 420–424 (NLCIE), and 614–618 (PTATS) contribute to the substrate site. Residues Cys194 and Cys440 are joined by a disulfide bond. The Proton acceptor role is filled by Asn420. Cys422 serves as the catalytic Cysteine radical intermediate. The active-site Proton acceptor is the Glu424.

This sequence belongs to the ribonucleoside diphosphate reductase large chain family. As to quaternary structure, heterotetramer composed of a homodimer of the large subunit (R1) and a homodimer of the small subunit (R2). Larger multisubunit protein complex are also active, composed of (R1)n(R2)n.

It carries out the reaction a 2'-deoxyribonucleoside 5'-diphosphate + [thioredoxin]-disulfide + H2O = a ribonucleoside 5'-diphosphate + [thioredoxin]-dithiol. Its activity is regulated as follows. Under complex allosteric control mediated by deoxynucleoside triphosphates and ATP binding. The type of nucleotide bound at the specificity site determines substrate preference. It seems probable that ATP makes the enzyme reduce CDP and UDP, dGTP favors ADP reduction and dTTP favors GDP reduction. Its function is as follows. Ribonucleoside-diphosphate reductase holoenzyme provides the precursors necessary for viral DNA synthesis. Allows virus growth in non-dividing cells. Catalyzes the biosynthesis of deoxyribonucleotides from the corresponding ribonucleotides. This is Ribonucleoside-diphosphate reductase large subunit from African swine fever virus (isolate Tick/Malawi/Lil 20-1/1983) (ASFV).